We begin with the raw amino-acid sequence, 396 residues long: Elongation factor Tu (396 aa).

One can recognise a tr-type G domain in the interval 10–206 (KPHVNVGTIG…ALDTYIPEPE (197 aa)). The segment at 19 to 26 (GHVDHGKT) is G1. 19–26 (GHVDHGKT) provides a ligand contact to GTP. Thr-26 is a Mg(2+) binding site. The interval 60-64 (GITIN) is G2. Residues 81 to 84 (DCPG) form a G3 region. Residues 81–85 (DCPGH) and 136–139 (NKAD) contribute to the GTP site. A G4 region spans residues 136-139 (NKAD). The G5 stretch occupies residues 174 to 176 (SAL).

This sequence belongs to the TRAFAC class translation factor GTPase superfamily. Classic translation factor GTPase family. EF-Tu/EF-1A subfamily. As to quaternary structure, monomer.

It is found in the cytoplasm. It catalyses the reaction GTP + H2O = GDP + phosphate + H(+). GTP hydrolase that promotes the GTP-dependent binding of aminoacyl-tRNA to the A-site of ribosomes during protein biosynthesis. This chain is Elongation factor Tu, found in Thiobacillus denitrificans (strain ATCC 25259 / T1).